A 71-amino-acid chain; its full sequence is Conotoxin Bu23 (71 aa).

The N-terminal stretch at 1 to 21 (MGMRMMVTVFLLGVLATTVVS) is a signal peptide. Residues 22 to 37 (LRSNRASDGRRGIVNK) constitute a propeptide that is removed on maturation. N70 carries the post-translational modification Asparagine amide.

The protein belongs to the conotoxin A superfamily. In terms of processing, contains 3 disulfide bonds. They are not indicated here, since framework IV presents two different connectivities (I-V, II-III, IV-VI and I-III, II-V, IV-VI). In terms of tissue distribution, expressed by the venom duct.

It localises to the secreted. This Conus bullatus (Bubble cone) protein is Conotoxin Bu23.